Consider the following 369-residue polypeptide: Protein RecA (369 aa).

Residue 77 to 84 (GPESSGKT) coordinates ATP.

The protein belongs to the RecA family.

The protein resides in the cytoplasm. Functionally, can catalyze the hydrolysis of ATP in the presence of single-stranded DNA, the ATP-dependent uptake of single-stranded DNA by duplex DNA, and the ATP-dependent hybridization of homologous single-stranded DNAs. It interacts with LexA causing its activation and leading to its autocatalytic cleavage. The protein is Protein RecA of Corynebacterium pseudotuberculosis (strain C231).